The chain runs to 1018 residues: Unconventional myosin-Ig (1018 aa).

Methionine 1 is subject to N-acetylmethionine. Residues 9-707 (YGKPDFVLLD…TLVTLEQSRA (699 aa)) form the Myosin motor domain. 102-109 (GESGAGKT) lines the ATP pocket. The actin-binding stretch occupies residues 584-606 (MVALVENLASKEPFYVRCIKPNE). Residues 710–739 (IPIIVLLLQKAWRGTLARWRCRRLRAIYTI) form the IQ domain. Residues 824 to 1017 (GLRQDWGCRR…RGSFTLLWPS (194 aa)) form the TH1 domain.

The protein belongs to the TRAFAC class myosin-kinesin ATPase superfamily. Myosin family. In terms of assembly, interacts with calmodulin; via its IQ motifs. As to expression, specifically expressed in hematopoietic cells.

The protein localises to the cell membrane. It is found in the cell projection. The protein resides in the phagocytic cup. Its function is as follows. Unconventional myosin required during immune response for detection of rare antigen-presenting cells by regulating T-cell migration. Unconventional myosins are actin-based motor molecules with ATPase activity and serve in intracellular movements. Acts as a regulator of T-cell migration by generating membrane tension, enforcing cell-intrinsic meandering search, thereby enhancing detection of rare antigens during lymph-node surveillance, enabling pathogen eradication. Also required in B-cells, where it regulates different membrane/cytoskeleton-dependent processes. Involved in Fc-gamma receptor (Fc-gamma-R) phagocytosis. Constitutes the minor histocompatibility antigen HA-2. More generally, minor histocompatibility antigens (mHags) refer to immunogenic peptide which, when complexed with MHC, can generate an immune response after recognition by specific T-cells. The peptides are derived from polymorphic intracellular proteins, which are cleaved by normal pathways of antigen processing. The binding of these peptides to MHC class I or class II molecules and their expression on the cell surface can stimulate T-cell responses and thereby trigger graft rejection or graft-versus-host disease (GVHD) after hematopoietic stem cell transplantation from HLA-identical sibling donor. GVHD is a frequent complication after bone marrow transplantation (BMT), due to mismatch of minor histocompatibility antigen in HLA-matched sibling marrow transplants. HA-2 is restricted to MHC class I HLA-A*0201. The protein is Unconventional myosin-Ig (MYO1G) of Homo sapiens (Human).